A 65-amino-acid chain; its full sequence is Putative beta-neurotoxin RjAa8 (65 aa).

Residues 1 to 64 (KEGYPMGRDG…VWDSSTNKCG (64 aa)) form the LCN-type CS-alpha/beta domain. Disulfide bonds link C11–C63, C15–C37, C22–C44, and C26–C46.

Belongs to the long (4 C-C) scorpion toxin superfamily. Sodium channel inhibitor family. Beta subfamily. As to expression, expressed by the venom gland.

The protein resides in the secreted. In terms of biological role, beta toxins bind voltage-independently at site-4 of sodium channels (Nav) and shift the voltage of activation toward more negative potentials thereby affecting sodium channel activation and promoting spontaneous and repetitive firing. The polypeptide is Putative beta-neurotoxin RjAa8 (Rhopalurus junceus (Caribbean blue scorpion)).